The sequence spans 97 residues: Small ribosomal subunit protein bS20 (97 aa).

The span at Arg-76–Gly-85 shows a compositional bias: basic residues. The disordered stretch occupies residues Arg-76–Ser-97. The segment covering Leu-86–Ser-97 has biased composition (low complexity).

Belongs to the bacterial ribosomal protein bS20 family.

Binds directly to 16S ribosomal RNA. In Microcystis aeruginosa (strain NIES-843 / IAM M-2473), this protein is Small ribosomal subunit protein bS20.